The sequence spans 173 residues: Ribosome maturation factor RimM (173 aa).

One can recognise a PRC barrel domain in the interval 98–170; it reads VGDMTWDSFI…SLTVSLPEGL (73 aa).

This sequence belongs to the RimM family. As to quaternary structure, binds ribosomal protein uS19.

The protein resides in the cytoplasm. Its function is as follows. An accessory protein needed during the final step in the assembly of 30S ribosomal subunit, possibly for assembly of the head region. Essential for efficient processing of 16S rRNA. May be needed both before and after RbfA during the maturation of 16S rRNA. It has affinity for free ribosomal 30S subunits but not for 70S ribosomes. The protein is Ribosome maturation factor RimM of Parabacteroides distasonis (strain ATCC 8503 / DSM 20701 / CIP 104284 / JCM 5825 / NCTC 11152).